We begin with the raw amino-acid sequence, 439 residues long: Exosome complex component RRP45 (439 aa).

The tract at residues 1-268 is ARE binding; it reads MKETPLSNCE…AEITELILKA (268 aa). Ser-65 carries the post-translational modification Phosphoserine. Lys-297 is subject to N6-acetyllysine; alternate. Lys-297 participates in a covalent cross-link: Glycyl lysine isopeptide (Lys-Gly) (interchain with G-Cter in SUMO1); alternate. Lys-297 participates in a covalent cross-link: Glycyl lysine isopeptide (Lys-Gly) (interchain with G-Cter in SUMO2); alternate. Phosphoserine is present on residues Ser-306, Val-325, Ser-327, and Ser-346. 2 disordered regions span residues 335 to 363 and 391 to 439; these read GTAQ…GGGD and LSDS…RAAN. Residues 349–361 are compositionally biased toward acidic residues; the sequence is DLEDSEKEDDEGG. Residues Ser-392, Ser-394, Lys-409, and Ile-411 each carry the phosphoserine modification. Residue Lys-419 forms a Glycyl lysine isopeptide (Lys-Gly) (interchain with G-Cter in SUMO2) linkage. A compositionally biased stretch (basic residues) spans 425 to 439; that stretch reads SKKPVKRRKKKRAAN.

Belongs to the RNase PH family. Component of the RNA exosome core complex (Exo-9), composed of EXOSC1, EXOSC2, EXOSC3, EXOSC4, EXOSC5, EXOSC6, EXOSC7, EXOSC8 and EXOSC9; within the complex interacts with EXOSC3, EXOSC4, EXOSC5 and DIS3. The catalytically inactive RNA exosome core complex (Exo-9) associates with the catalytic subunit EXOSC10/RRP6. Exo-9 may associate with DIS3 to form the nucleolar exosome complex, or DIS3L to form the cytoplasmic exosome complex. Exo-9 is formed by a hexameric base ring consisting of the heterodimers EXOSC4-EXOSC9, EXOSC5-EXOSC8 and EXOSC6-EXOSC7, and a cap ring consisting of EXOSC1, EXOSC2 and EXOSC3. The RNA exosome complex associates with cofactors C1D/RRP47, MPHOSPH6/MPP6 and MTREX/MTR4. Interacts (via C-terminus region) with SETX (via N-terminus domain); the interaction enhances SETX sumoylation. Interacts with DIS3; the interaction is direct.

Its subcellular location is the cytoplasm. It localises to the nucleus. The protein localises to the nucleolus. It is found in the nucleoplasm. Functionally, non-catalytic component of the RNA exosome complex which has 3'-&gt;5' exoribonuclease activity and participates in a multitude of cellular RNA processing and degradation events. In the nucleus, the RNA exosome complex is involved in proper maturation of stable RNA species such as rRNA, snRNA and snoRNA, in the elimination of RNA processing by-products and non-coding 'pervasive' transcripts, such as antisense RNA species and promoter-upstream transcripts (PROMPTs), and of mRNAs with processing defects, thereby limiting or excluding their export to the cytoplasm. The RNA exosome may be involved in Ig class switch recombination (CSR) and/or Ig variable region somatic hypermutation (SHM) by targeting AICDA deamination activity to transcribed dsDNA substrates. In the cytoplasm, the RNA exosome complex is involved in general mRNA turnover and specifically degrades inherently unstable mRNAs containing AU-rich elements (AREs) within their 3' untranslated regions, and in RNA surveillance pathways, preventing translation of aberrant mRNAs. It seems to be involved in degradation of histone mRNA. The catalytic inactive RNA exosome core complex of 9 subunits (Exo-9) is proposed to play a pivotal role in the binding and presentation of RNA for ribonucleolysis, and to serve as a scaffold for the association with catalytic subunits and accessory proteins or complexes. EXOSC9 binds to ARE-containing RNAs. This Homo sapiens (Human) protein is Exosome complex component RRP45 (EXOSC9).